A 167-amino-acid chain; its full sequence is Cytochrome b6-f complex subunit 4 (167 aa).

The next 3 helical transmembrane spans lie at 36–56 (LLYI…GLAV), 95–115 (LLGV…PFLE), and 131–151 (TVFL…TLPI).

It belongs to the cytochrome b family. PetD subfamily. As to quaternary structure, the 4 large subunits of the cytochrome b6-f complex are cytochrome b6, subunit IV (17 kDa polypeptide, petD), cytochrome f and the Rieske protein, while the 4 small subunits are petG, petL, petM and petN. The complex functions as a dimer.

The protein localises to the plastid. It localises to the chloroplast thylakoid membrane. Its function is as follows. Component of the cytochrome b6-f complex, which mediates electron transfer between photosystem II (PSII) and photosystem I (PSI), cyclic electron flow around PSI, and state transitions. The polypeptide is Cytochrome b6-f complex subunit 4 (Calycanthus floridus var. glaucus (Eastern sweetshrub)).